Consider the following 193-residue polypeptide: Major structural subunit of bundle-forming pilus (193 aa).

Positions 1 to 13 are cleaved as a propeptide — leader sequence; that stretch reads MVSKIMNKKYEKG. An N-methylleucine modification is found at leucine 14. The helical transmembrane segment at 14–35 threads the bilayer; that stretch reads LSLIESAMVLALAATVTAGVMF. A disulfide bridge links cysteine 129 with cysteine 179.

It belongs to the N-Me-Phe pilin family. As to quaternary structure, 10 to 100 laterally aligned filaments or bundle-forming pili coalesce into rope-like bundles. These form linkages between the bacteria within the enteropathogenic E.coli (EPEC) microcolonies that are attached to epithelial cells.

The protein resides in the fimbrium. It is found in the membrane. Functionally, major component of type IV bundle-forming pili (BFP) that plays a role in adherence to host cells and virulence. The protein is Major structural subunit of bundle-forming pilus (bfpA) of Escherichia coli O127:H6 (strain E2348/69 / EPEC).